Here is a 294-residue protein sequence, read N- to C-terminus: Basic endochitinase (294 aa).

Positions 1–24 (MNIKVSLLFILPIFLLLLTSKVKA) are cleaved as a signal peptide. The GH18 domain maps to 25–294 (GDIVVYWGQD…GYSSAIRGAV (270 aa)). Cystine bridges form between C44–C91 and C74–C81. E151 acts as the Proton donor in catalysis. C182 and C211 form a disulfide bridge.

Belongs to the glycosyl hydrolase 18 family. Chitinase class II subfamily.

It catalyses the reaction Random endo-hydrolysis of N-acetyl-beta-D-glucosaminide (1-&gt;4)-beta-linkages in chitin and chitodextrins.. Functionally, this protein functions as a defense against chitin containing fungal pathogens. The chain is Basic endochitinase from Nicotiana tabacum (Common tobacco).